A 165-amino-acid polypeptide reads, in one-letter code: Small ribosomal subunit protein uS13 (165 aa).

Residues 139 to 165 form a disordered region; it reads GMTIGVARKKAAQPQSQQSSSQQQKSS. Residues 153 to 165 show a composition bias toward low complexity; it reads QSQQSSSQQQKSS.

It belongs to the universal ribosomal protein uS13 family. As to quaternary structure, part of the 30S ribosomal subunit. Forms a loose heterodimer with protein S19. Forms two bridges to the 50S subunit in the 70S ribosome.

Its function is as follows. Located at the top of the head of the 30S subunit, it contacts several helices of the 16S rRNA. In the 70S ribosome it contacts the 23S rRNA (bridge B1a) and protein L5 of the 50S subunit (bridge B1b), connecting the 2 subunits; these bridges are implicated in subunit movement. This chain is Small ribosomal subunit protein uS13, found in Saccharolobus solfataricus (strain ATCC 35092 / DSM 1617 / JCM 11322 / P2) (Sulfolobus solfataricus).